The following is a 339-amino-acid chain: MKFVSVEQAIKDLQAGKMLVMVDAEDRENEGDLIFPAQFSTQEKVNFMIKEARGVVCVALDETLAKKFELPLMVPKNTSNHETAFTITVDAKDATTGVSAYERNMTIQIFADDNAKASDFVRPGHINPLIAKKGGVLERTGHTEGTVDLCKLAGLKGACVICEIVKDNGDMARREDLEIFCQKHDLNMIAVSDLIEYRLKHESLIKLEEKSQSVLAGFKAEKFIFSDHNQTQHIAFCFKDIKKCENVKFHISGSDFELLTSDKFSKLLEQIKFLSENGGVIVFMQGEKSSTTQYKNYGIGAQILRYFGIEEIKLLSQSCDKDYIGLEGFGLNLKACNFN.

The segment at 1–206 (MKFVSVEQAI…YRLKHESLIK (206 aa)) is DHBP synthase. Residues 27 to 28 (RE), Asp-32, 139 to 143 (RTGHT), and Glu-163 contribute to the D-ribulose 5-phosphate site. Mg(2+) is bound at residue Glu-28. His-142 is a binding site for Mg(2+). Positions 207–339 (LEEKSQSVLA…GLNLKACNFN (133 aa)) are GTP cyclohydrolase II-like.

In the N-terminal section; belongs to the DHBP synthase family. The protein in the C-terminal section; belongs to the GTP cyclohydrolase II family. Mg(2+) serves as cofactor. Mn(2+) is required as a cofactor.

It carries out the reaction D-ribulose 5-phosphate = (2S)-2-hydroxy-3-oxobutyl phosphate + formate + H(+). Its pathway is cofactor biosynthesis; riboflavin biosynthesis; 2-hydroxy-3-oxobutyl phosphate from D-ribulose 5-phosphate: step 1/1. Catalyzes the conversion of D-ribulose 5-phosphate to formate and 3,4-dihydroxy-2-butanone 4-phosphate. This chain is 3,4-dihydroxy-2-butanone 4-phosphate synthase (ribB), found in Campylobacter jejuni subsp. jejuni serotype O:2 (strain ATCC 700819 / NCTC 11168).